The chain runs to 238 residues: B-box zinc finger protein 25 (238 aa).

Residues cysteine 5, cysteine 8, cysteine 28, histidine 33, cysteine 57, cysteine 60, cysteine 80, and histidine 85 each coordinate Zn(2+). A B box-type 1; atypical zinc finger spans residues 5–47 (CDVCEKAPATLICCADEAALCAKCDVEVHAANKLASKHQRLFL). The B box-type 2; atypical zinc finger occupies 57 to 99 (CDICLEKAAFIFCVEDRALLCRDCDEATHAPNTRSANHQRFLA). Residues 115 to 139 (VEKNHFDPSNQQSLSKPPTQQPAAP) form a disordered region. Positions 121 to 137 (DPSNQQSLSKPPTQQPA) are enriched in polar residues. An interaction with COP1 region spans residues 226–238 (DDEEEHFLVPDLG).

In terms of assembly, interacts with COP1 WD40 domain. Interacts with HY5 and HYH. Post-translationally, COP1-mediated ubiquitination and subsequent proteasomal degradation of BBX25/STH occurs in the dark.

The protein localises to the nucleus. Its function is as follows. Acts as a negative regulator of seedling photomorphogenesis. BBX25/STH and BBX24/STO function as transcriptional corepressors of HY5 activity, leading to the down-regulation of BBX22 expression. BBX25/STH acts additively with BBX24/STO during de-etiolation and the hypocotyl shade avoidance response. The polypeptide is B-box zinc finger protein 25 (Arabidopsis thaliana (Mouse-ear cress)).